The following is a 158-amino-acid chain: ABA-responsive protein ABR18 (158 aa).

Belongs to the BetVI family.

This Pisum sativum (Garden pea) protein is ABA-responsive protein ABR18.